Consider the following 314-residue polypeptide: N-alpha-acetyltransferase 80 (314 aa).

In terms of domain architecture, N-acetyltransferase spans 90–243 (LEPVHCRPEL…TTVLRAFSKP (154 aa)). Substrate-binding positions include R113 and 118–121 (RLHS). Acetyl-CoA-binding positions include 169-171 (VVV), 177-182 (GRGFGR), and Q207. The disordered stretch occupies residues 260–295 (VPRSSKGPPLPPPPPLPQSLTASPPPSPEPLPQSPL). The segment covering 267–292 (PPLPPPPPLPQSLTASPPPSPEPLPQ) has biased composition (pro residues).

The protein belongs to the acetyltransferase family.

It localises to the cytoplasm. The protein resides in the cytosol. It carries out the reaction N-terminal L-aspartyl-L-aspartyl-L-aspartyl-[protein] + acetyl-CoA = N-terminal N-acetyl-L-aspartyl-L-aspartyl-L-aspartyl-[protein] + CoA + H(+). It catalyses the reaction N-terminal L-glutamyl-L-glutamyl-L-glutamyl-[protein] + acetyl-CoA = N-terminal N-acetyl-L-glutamyl-L-glutamyl-L-glutamyl-[protein] + CoA + H(+). N-alpha-acetyltransferase that specifically mediates the acetylation of the acidic amino terminus of processed forms of beta- and gamma-actin (ACTB and ACTG, respectively). N-terminal acetylation of processed beta- and gamma-actin regulates actin filament depolymerization and elongation. In vivo, preferentially displays N-terminal acetyltransferase activity towards acid N-terminal sequences starting with Asp-Asp-Asp and Glu-Glu-Glu. In vitro, shows high activity towards Met-Asp-Glu-Leu and Met-Asp-Asp-Asp. May act as a tumor suppressor. This chain is N-alpha-acetyltransferase 80, found in Mus musculus (Mouse).